Consider the following 190-residue polypeptide: Secretory phospholipase A2 (190 aa).

Positions 1–15 (MKLAYFSSLLPLALA) are cleaved as a signal peptide. An intrachain disulfide couples Cys62 to Cys78. Ala65 is a binding site for Ca(2+). Residue His81 is part of the active site. Asp82 is a Ca(2+) binding site.

The protein belongs to the phospholipase A2 family. Ca(2+) is required as a cofactor.

It is found in the lipid droplet. The protein resides in the secreted. It carries out the reaction a 1,2-diacyl-sn-glycero-3-phosphocholine + H2O = a 1-acyl-sn-glycero-3-phosphocholine + a fatty acid + H(+). Secretory phospholipase that catalyzes the calcium-dependent hydrolysis of the 2-acyl groups in 3-sn-phosphoglycerides. Increases the ability to utilize insect-derived nutrients and lipids, and promotes lipid dropplets accumulation. Plays a role in virulence, including more efficient penetration of the insect cuticle and evasion of host immune response by repressing the expression of host immunity genes. The sequence is that of Secretory phospholipase A2 from Beauveria bassiana (strain ARSEF 2860) (White muscardine disease fungus).